Consider the following 818-residue polypeptide: Protocadherin beta-1 (818 aa).

Positions 1-28 are cleaved as a signal peptide; the sequence is MAGTRRKSLQNRQVGSLLIFLCISVGDA. Topologically, residues 29–691 are extracellular; it reads TTIRYSVAEE…RKVNPSTKYL (663 aa). Cadherin domains lie at 35–133, 138–242, 243–347, 348–452, and 457–562; these read VAEE…APVF, PLLK…VPQF, SRLV…PPEV, MVSS…PPIF, and YILT…RPMI. N-linked (GlcNAc...) asparagine glycosylation is found at N169, N209, N257, and N419. N-linked (GlcNAc...) asparagine glycosylation is present at N568. The Cadherin 6 domain maps to 577 to 672; sequence VPRSAEAGYL…LVDGFSEPYL (96 aa). Residues 692–712 traverse the membrane as a helical segment; that stretch reads VISLVILSFLFLLSVIVIFII. Residues 713 to 818 lie on the Cytoplasmic side of the membrane; the sequence is HVYQKIKYRE…GHDQVSDDYM (106 aa). The tract at residues 789–818 is disordered; the sequence is MEAGSSLPPNSDRNKSQRLEGHDQVSDDYM. Basic and acidic residues predominate over residues 800-818; it reads DRNKSQRLEGHDQVSDDYM.

It is found in the cell membrane. In terms of biological role, potential calcium-dependent cell-adhesion protein. May be involved in the establishment and maintenance of specific neuronal connections in the brain. The protein is Protocadherin beta-1 (PCDHB1) of Homo sapiens (Human).